A 600-amino-acid chain; its full sequence is MCGIVGYIGQLDAKEILLKGLEKLEYRGYDSAGIAVANEDGVHVFKEKGRIADLRAAVDANVKSQAGIGHTRWATHGEPSRLNAHPHQSASGRFTLVHNGVIENYVQLTREYLHDVTLKSDTDTEVVVQVIEQFVNNGLDTEEAFRQTLMLLKGSYAIALFDHENKETIYVAKNKSPLLVGLGDNFNVVASDAMAMLQVTNEYVELMDKEMVIVTDKKVVIKNLDGELMSRASYIAELDASDIEKGTYPHYMLKEIDEQPLVMRKIIQTYQDENGKLSIPGDISNAVAEADRVYIIACGTSYHAGLVGKQFIETWAKVPAEVHVASEFSYNMPLLSEKPLFIFISQSGETADSRAVLVQVKKLGHKALTLTNVPGSTLSREADYTLLLNAGPEIAVASTKAYTAQIAVLAILAAVTAESRGKELGFDLVKELGIIGNAMEALCDQKDEMEMIAREYLTVTRNAFFIGRGLDYFVCLEGSLKLKEISYIQAEGFAGGELKHGTIALIEDGTPVIALATQEHVNLSIRGNVKEVTARGANPCVISLKGLEEADDRFVLPEVHPELAPLVSVIPLQLIAYYAALHRGCDVDKPRNLAKSVTVE.

The Nucleophile; for GATase activity role is filled by Cys-2. Residues 2–217 (CGIVGYIGQL…DKEMVIVTDK (216 aa)) form the Glutamine amidotransferase type-2 domain. SIS domains lie at 283 to 422 (ISNA…SRGK) and 452 to 590 (IARE…VDKP). Lys-595 serves as the catalytic For Fru-6P isomerization activity.

In terms of assembly, homodimer.

It is found in the cytoplasm. The catalysed reaction is D-fructose 6-phosphate + L-glutamine = D-glucosamine 6-phosphate + L-glutamate. Its function is as follows. Catalyzes the first step in hexosamine metabolism, converting fructose-6P into glucosamine-6P using glutamine as a nitrogen source. The protein is Glutamine--fructose-6-phosphate aminotransferase [isomerizing] of Bacillus licheniformis (strain ATCC 14580 / DSM 13 / JCM 2505 / CCUG 7422 / NBRC 12200 / NCIMB 9375 / NCTC 10341 / NRRL NRS-1264 / Gibson 46).